We begin with the raw amino-acid sequence, 355 residues long: 6-aminohexanoate-oligomer endohydrolase (355 aa).

The active-site Nucleophile is threonine 267.

The protein belongs to the peptidase S58 family. In terms of assembly, heterotetramer composed of 4 alpha/beta heterodimers. Post-translationally, expressed as an inactive precursor that is cleaved autocatalytically at Asn266/Thr267 to generate an active enzyme composed of an alpha subunit and a beta subunit.

The enzyme catalyses [N-(6-aminohexanoyl)]n + H2O = [N-(6-aminohexanoyl)]n-x + [N-(6-aminohexanoyl)]x.. The protein operates within xenobiotic degradation; nylon-6 oligomer degradation. Involved in the degradation of nylon-6 oligomers. Degrades cyclic and linear oligomers of 6-aminohexanoate (Ahx) with a degree of polymerization greater than three by an endo-type mode. Cannot use Ahx cyclic dimer or the Ahx linear dimer. This Agromyces sp. (strain KY5R) protein is 6-aminohexanoate-oligomer endohydrolase.